We begin with the raw amino-acid sequence, 875 residues long: Alanine--tRNA ligase (875 aa).

Zn(2+) is bound by residues His563, His567, Cys665, and His669.

Belongs to the class-II aminoacyl-tRNA synthetase family. The cofactor is Zn(2+).

The protein localises to the cytoplasm. The catalysed reaction is tRNA(Ala) + L-alanine + ATP = L-alanyl-tRNA(Ala) + AMP + diphosphate. Functionally, catalyzes the attachment of alanine to tRNA(Ala) in a two-step reaction: alanine is first activated by ATP to form Ala-AMP and then transferred to the acceptor end of tRNA(Ala). Also edits incorrectly charged Ser-tRNA(Ala) and Gly-tRNA(Ala) via its editing domain. This Shewanella pealeana (strain ATCC 700345 / ANG-SQ1) protein is Alanine--tRNA ligase.